The following is a 199-amino-acid chain: Peptidyl-tRNA hydrolase (199 aa).

Residue Tyr15 coordinates tRNA. Residue His20 is the Proton acceptor of the active site. TRNA-binding residues include Tyr66, Asn68, and Asn114.

It belongs to the PTH family. In terms of assembly, monomer.

It localises to the cytoplasm. It carries out the reaction an N-acyl-L-alpha-aminoacyl-tRNA + H2O = an N-acyl-L-amino acid + a tRNA + H(+). Its function is as follows. Hydrolyzes ribosome-free peptidyl-tRNAs (with 1 or more amino acids incorporated), which drop off the ribosome during protein synthesis, or as a result of ribosome stalling. Functionally, catalyzes the release of premature peptidyl moieties from peptidyl-tRNA molecules trapped in stalled 50S ribosomal subunits, and thus maintains levels of free tRNAs and 50S ribosomes. This is Peptidyl-tRNA hydrolase from Burkholderia multivorans (strain ATCC 17616 / 249).